Here is an 85-residue protein sequence, read N- to C-terminus: uncharacterized protein (85 aa).

Position 22 is a phosphoserine (serine 22).

The protein resides in the cytoplasm. It localises to the nucleus. This is an uncharacterized protein from Saccharomyces cerevisiae (strain ATCC 204508 / S288c) (Baker's yeast).